We begin with the raw amino-acid sequence, 196 residues long: MPFVVMITGIPGVGKSTITRLALRKARAKFRLVNFGDLMFEEAVRAGLVEHRDEMRKLNPNVQKELQMKAARRIVEMAKTEPILIDTHATIRTPVGYLLGFPKEVIEVINPNFIVIIEATPSEILGRRLRDLKRDRDVETEEQIQRHQDLNRAAAVSYAMHSNALIKIIENHEDKGLEEAVHELVEVLDLAVGEYD.

ATP is bound at residue 9–17 (GIPGVGKST).

This sequence belongs to the archaeal adenylate kinase family.

It localises to the cytoplasm. It carries out the reaction AMP + ATP = 2 ADP. This is Adenylate kinase from Thermococcus onnurineus (strain NA1).